Consider the following 504-residue polypeptide: Probable cytosol aminopeptidase (504 aa).

Mn(2+) is bound by residues K274 and D279. K286 is an active-site residue. Mn(2+)-binding residues include D297, D356, and E358. R360 is a catalytic residue.

This sequence belongs to the peptidase M17 family. Mn(2+) is required as a cofactor.

The protein resides in the cytoplasm. The catalysed reaction is Release of an N-terminal amino acid, Xaa-|-Yaa-, in which Xaa is preferably Leu, but may be other amino acids including Pro although not Arg or Lys, and Yaa may be Pro. Amino acid amides and methyl esters are also readily hydrolyzed, but rates on arylamides are exceedingly low.. It catalyses the reaction Release of an N-terminal amino acid, preferentially leucine, but not glutamic or aspartic acids.. Its function is as follows. Presumably involved in the processing and regular turnover of intracellular proteins. Catalyzes the removal of unsubstituted N-terminal amino acids from various peptides. This Gloeobacter violaceus (strain ATCC 29082 / PCC 7421) protein is Probable cytosol aminopeptidase.